We begin with the raw amino-acid sequence, 144 residues long: Large ribosomal subunit protein uL15 (144 aa).

Residues 1 to 58 are disordered; the sequence is MRLNELAPEPGSRPSAKRVGRGIGSGLGKTGGRGHKGLKSRSGGSVAPGFEGGQQPLA. Over residues 21–31 the composition is skewed to gly residues; that stretch reads RGIGSGLGKTG.

It belongs to the universal ribosomal protein uL15 family. As to quaternary structure, part of the 50S ribosomal subunit.

Its function is as follows. Binds to the 23S rRNA. The chain is Large ribosomal subunit protein uL15 from Marinobacter nauticus (strain ATCC 700491 / DSM 11845 / VT8) (Marinobacter aquaeolei).